We begin with the raw amino-acid sequence, 387 residues long: Succinate--CoA ligase [ADP-forming] subunit beta (387 aa).

One can recognise an ATP-grasp domain in the interval 9 to 236 (KELFAKHNVP…KDATDPLELK (228 aa)). ATP contacts are provided by residues lysine 45, 52 to 54 (GRG), serine 94, and glutamate 99. Residues asparagine 191 and aspartate 205 each coordinate Mg(2+). Substrate contacts are provided by residues asparagine 256 and 318 to 320 (GIT).

The protein belongs to the succinate/malate CoA ligase beta subunit family. As to quaternary structure, heterotetramer of two alpha and two beta subunits. Mg(2+) is required as a cofactor.

It catalyses the reaction succinate + ATP + CoA = succinyl-CoA + ADP + phosphate. The catalysed reaction is GTP + succinate + CoA = succinyl-CoA + GDP + phosphate. Its pathway is carbohydrate metabolism; tricarboxylic acid cycle; succinate from succinyl-CoA (ligase route): step 1/1. Succinyl-CoA synthetase functions in the citric acid cycle (TCA), coupling the hydrolysis of succinyl-CoA to the synthesis of either ATP or GTP and thus represents the only step of substrate-level phosphorylation in the TCA. The beta subunit provides nucleotide specificity of the enzyme and binds the substrate succinate, while the binding sites for coenzyme A and phosphate are found in the alpha subunit. The polypeptide is Succinate--CoA ligase [ADP-forming] subunit beta (Mycolicibacterium gilvum (strain PYR-GCK) (Mycobacterium gilvum (strain PYR-GCK))).